The following is a 240-amino-acid chain: MKEDSTMTYLTQKEAQEIDAELMGPKYGYTLAQLMELAGLACAQALHKVYGPERYPRVLVCCGPGNQGGDGLVAARHLWHFGHKPTLYYPKQTDKEHYKSLLRQCETLGIPVIGANFSEAVGETDVILDAIFGFSFHSEPRAPFDEPIRSFQQTQTPIVSVDIPSGWDVETGNPNHVYFTPNVLVSLTAPKRGVKSFPGRHFLGGRFIPPGIVKSYNLKLPCYPSSDQVVEITAVQGEDK.

The YjeF N-terminal domain occupies 15 to 224; sequence AQEIDAELMG…SYNLKLPCYP (210 aa). Position 66–70 (66–70) interacts with (6S)-NADPHX; it reads NQGGD. K(+) is bound by residues Q67 and D129. Residues 133-139 and D162 each bind (6S)-NADPHX; that span reads GFSFHSE. Residue S165 coordinates K(+).

Belongs to the NnrE/AIBP family. It depends on K(+) as a cofactor.

The protein localises to the cytoplasm. Its subcellular location is the mitochondrion. The enzyme catalyses (6R)-NADHX = (6S)-NADHX. It catalyses the reaction (6R)-NADPHX = (6S)-NADPHX. Catalyzes the epimerization of the S- and R-forms of NAD(P)HX, a damaged form of NAD(P)H that is a result of enzymatic or heat-dependent hydration. This is a prerequisite for the S-specific NAD(P)H-hydrate dehydratase to allow the repair of both epimers of NAD(P)HX. The chain is NAD(P)H-hydrate epimerase from Puccinia graminis f. sp. tritici (strain CRL 75-36-700-3 / race SCCL) (Black stem rust fungus).